The following is a 151-amino-acid chain: Ribosomal RNA large subunit methyltransferase H (151 aa).

Residues Gly100 and Leu119–Phe124 contribute to the S-adenosyl-L-methionine site.

This sequence belongs to the RNA methyltransferase RlmH family. In terms of assembly, homodimer.

Its subcellular location is the cytoplasm. It carries out the reaction pseudouridine(1915) in 23S rRNA + S-adenosyl-L-methionine = N(3)-methylpseudouridine(1915) in 23S rRNA + S-adenosyl-L-homocysteine + H(+). Functionally, specifically methylates the pseudouridine at position 1915 (m3Psi1915) in 23S rRNA. The sequence is that of Ribosomal RNA large subunit methyltransferase H from Thermotoga neapolitana (strain ATCC 49049 / DSM 4359 / NBRC 107923 / NS-E).